An 80-amino-acid chain; its full sequence is Metallothionein-like protein type 2 MET1 (80 aa).

The protein belongs to the metallothionein superfamily. Type 15 family.

Metallothioneins have a high content of cysteine residues that bind various heavy metals. This is Metallothionein-like protein type 2 MET1 (MET1) from Fragaria ananassa (Strawberry).